Consider the following 177-residue polypeptide: Nucleoside triphosphate/diphosphate phosphatase (177 aa).

The active-site Proton donor is arginine 23. Residues asparagine 87, aspartate 103, aspartate 105, aspartate 107, aspartate 120, and glutamate 123 each contribute to the Mg(2+) site.

This sequence belongs to the Ntdp family. It depends on Mg(2+) as a cofactor.

The catalysed reaction is a ribonucleoside 5'-triphosphate + H2O = a ribonucleoside 5'-diphosphate + phosphate + H(+). It catalyses the reaction a ribonucleoside 5'-diphosphate + H2O = a ribonucleoside 5'-phosphate + phosphate + H(+). In terms of biological role, has nucleoside phosphatase activity towards nucleoside triphosphates and nucleoside diphosphates. In Streptococcus pneumoniae serotype 19F (strain G54), this protein is Nucleoside triphosphate/diphosphate phosphatase.